Here is a 741-residue protein sequence, read N- to C-terminus: 1,4-alpha-glucan branching enzyme GlgB (741 aa).

Residue Asp420 is the Nucleophile of the active site. Residue Glu473 is the Proton donor of the active site.

This sequence belongs to the glycosyl hydrolase 13 family. GlgB subfamily. As to quaternary structure, monomer.

The enzyme catalyses Transfers a segment of a (1-&gt;4)-alpha-D-glucan chain to a primary hydroxy group in a similar glucan chain.. The protein operates within glycan biosynthesis; glycogen biosynthesis. In terms of biological role, catalyzes the formation of the alpha-1,6-glucosidic linkages in glycogen by scission of a 1,4-alpha-linked oligosaccharide from growing alpha-1,4-glucan chains and the subsequent attachment of the oligosaccharide to the alpha-1,6 position. This Pseudomonas syringae pv. tomato (strain ATCC BAA-871 / DC3000) protein is 1,4-alpha-glucan branching enzyme GlgB.